We begin with the raw amino-acid sequence, 131 residues long: Ribonuclease VapC4 (131 aa).

The region spanning 4–106 (IVPDTNFLIY…IVATNDKELK (103 aa)) is the PINc domain. Mg(2+) is bound by residues Asp-7 and Asp-102.

The protein belongs to the PINc/VapC protein family. It depends on Mg(2+) as a cofactor.

Its function is as follows. Toxic component of a type II toxin-antitoxin (TA) system. An RNase. Its cognate antitoxin is VapB4. The protein is Ribonuclease VapC4 of Methanocaldococcus jannaschii (strain ATCC 43067 / DSM 2661 / JAL-1 / JCM 10045 / NBRC 100440) (Methanococcus jannaschii).